A 295-amino-acid polypeptide reads, in one-letter code: Protein NEOXANTHIN-DEFICIENT 1 (295 aa).

The tract at residues 221–251 (PAKVSGPSESDADKENSSEDQSSNVESVSRV) is disordered.

Its function is as follows. Required for neoxanthin biosynthesis. Probably not involved directly in the enzymatic conversion of violaxanthin to neoxanthin. Is necessary but not sufficient for neoxanthin synthesis. Seems not required for abscisic acid (ABA) biosynthesis in response to drought stress. This chain is Protein NEOXANTHIN-DEFICIENT 1, found in Solanum lycopersicum (Tomato).